We begin with the raw amino-acid sequence, 360 residues long: Peptide chain release factor 1 (360 aa).

Gln-234 carries the N5-methylglutamine modification.

It belongs to the prokaryotic/mitochondrial release factor family. Post-translationally, methylated by PrmC. Methylation increases the termination efficiency of RF1.

Its subcellular location is the cytoplasm. In terms of biological role, peptide chain release factor 1 directs the termination of translation in response to the peptide chain termination codons UAG and UAA. This Clostridium perfringens (strain 13 / Type A) protein is Peptide chain release factor 1.